An 89-amino-acid chain; its full sequence is Elongation factor 1-beta (89 aa).

This sequence belongs to the EF-1-beta/EF-1-delta family.

Functionally, promotes the exchange of GDP for GTP in EF-1-alpha/GDP, thus allowing the regeneration of EF-1-alpha/GTP that could then be used to form the ternary complex EF-1-alpha/GTP/AAtRNA. The chain is Elongation factor 1-beta from Methanococcus vannielii (strain ATCC 35089 / DSM 1224 / JCM 13029 / OCM 148 / SB).